The following is a 222-amino-acid chain: 7-cyano-7-deazaguanine synthase (222 aa).

11–21 (FSGGQDSTTCL) is an ATP binding site. The Zn(2+) site is built by C187, C195, C198, and C201.

The protein belongs to the QueC family. It depends on Zn(2+) as a cofactor.

It catalyses the reaction 7-carboxy-7-deazaguanine + NH4(+) + ATP = 7-cyano-7-deazaguanine + ADP + phosphate + H2O + H(+). The protein operates within purine metabolism; 7-cyano-7-deazaguanine biosynthesis. In terms of biological role, catalyzes the ATP-dependent conversion of 7-carboxy-7-deazaguanine (CDG) to 7-cyano-7-deazaguanine (preQ(0)). In Actinobacillus pleuropneumoniae serotype 3 (strain JL03), this protein is 7-cyano-7-deazaguanine synthase.